We begin with the raw amino-acid sequence, 238 residues long: 3-dehydroquinate dehydratase (238 aa).

Residues E35–R37 and R70 contribute to the 3-dehydroquinate site. H133 functions as the Proton donor/acceptor in the catalytic mechanism. Residue K160 is the Schiff-base intermediate with substrate of the active site. R202 and Q225 together coordinate 3-dehydroquinate.

This sequence belongs to the type-I 3-dehydroquinase family. In terms of assembly, homodimer.

The catalysed reaction is 3-dehydroquinate = 3-dehydroshikimate + H2O. The protein operates within metabolic intermediate biosynthesis; chorismate biosynthesis; chorismate from D-erythrose 4-phosphate and phosphoenolpyruvate: step 3/7. Its function is as follows. Involved in the third step of the chorismate pathway, which leads to the biosynthesis of aromatic amino acids. Catalyzes the cis-dehydration of 3-dehydroquinate (DHQ) and introduces the first double bond of the aromatic ring to yield 3-dehydroshikimate. This chain is 3-dehydroquinate dehydratase, found in Staphylococcus aureus (strain Mu3 / ATCC 700698).